Reading from the N-terminus, the 848-residue chain is DNA-binding protein RFX6 (848 aa).

Positions 56–131 form a DNA-binding region, RFX-type winged-helix; that stretch reads TLQWLEDNYI…YHYYGIGIKE (76 aa).

This sequence belongs to the RFX family. Expressed in progenitors and hormone expressing cells of the islet lineage.

The protein resides in the nucleus. In terms of biological role, transcription factor required to direct islet cell differentiation during endocrine pancreas development. This Danio rerio (Zebrafish) protein is DNA-binding protein RFX6 (rfx6).